We begin with the raw amino-acid sequence, 1292 residues long: HMG domain-containing protein 3 (1292 aa).

Residues 42 to 110 constitute a DNA-binding region (HMG box); the sequence is TKKPRSAYLL…GLDPNSKLSA (69 aa). 3 disordered regions span residues 363 to 391, 448 to 505, and 562 to 588; these read SKGSVVKRNQQPVTTEQNSSKENASKLTL, VQPE…GRAR, and KQLGQPIQQPSGPGEVKLPSGPSNRTS. The span at 370–391 shows a compositional bias: polar residues; that stretch reads RNQQPVTTEQNSSKENASKLTL. Residues 467–478 show a composition bias toward low complexity; the sequence is PTPSEGTSTSSP. A compositionally biased stretch (polar residues) spans 562–572; sequence KQLGQPIQQPS.

The protein localises to the nucleus. The chain is HMG domain-containing protein 3 from Homo sapiens (Human).